Consider the following 430-residue polypeptide: Transcription factor E2F1 (430 aa).

A cyclin A:CDK2 binding region spans residues 62 to 103 (ATPQAPRPAPSAPRPALGRPPVKRRLDLETDHQYLAGSSGPF). An interaction with BIRC2/c-IAP1 region spans residues 84 to 186 (KRRLDLETDH…KKSKNHIQWL (103 aa)). Positions 95–123 (YLAGSSGPFRGRGRHPGKGVKSPGEKSRY) are disordered. Residues 105–189 (GRGRHPGKGV…KNHIQWLGSH (85 aa)) mediate DNA binding. Residues Lys-112, Lys-115, and Lys-120 each carry the N6-acetyllysine modification. The tract at residues 148–169 (LNWAAEVLKVQKRRIYDITNVL) is leucine-zipper. Positions 153–189 (EVLKVQKRRIYDITNVLEGIQLIAKKSKNHIQWLGSH) match the DEF box motif. Lys-180 is modified (N6-methyllysine; by SETD7). The tract at residues 187–375 (GSHTMVGIGK…QLSPLVAADS (189 aa)) is required for interaction with TRIM28. Positions 190–279 (TMVGIGKRLE…AVDSSETFQI (90 aa)) are dimerization. Positions 294–340 (PEESADGISPGKTSCQETSSGEDRTADSGPAGPPPSPPSTSPALDPS) are disordered. Over residues 324-333 (AGPPPSPPST) the composition is skewed to pro residues. Residues 361-430 (PMEEDQLSPL…DFGDLTPLDF (70 aa)) are transactivation. Ser-368 and Ser-396 each carry phosphoserine. Residues 402–419 (LDYHFGLEEGEGIRDLFD) are RB1 binding. Thr-426 is modified (phosphothreonine).

It belongs to the E2F/DP family. In terms of assembly, component of the DRTF1/E2F transcription factor complex. Forms heterodimers with DP family members. The E2F1 complex binds specifically hypophosphorylated RB1, the interaction represses E2F1-driven transcription. During the cell cycle, RB1 becomes phosphorylated in mid-to-late G1 phase, detaches from the DRTF1/E2F complex, rendering E2F transcriptionally active. Interacts with TRRAP, which probably mediates its interaction with histone acetyltransferase complexes, leading to transcription activation. Binds TOPBP1 and EAPP. Interacts with ARID3A. Interacts with TRIM28; the interaction inhibits E2F1 acetylation through recruiting HDAC1 and represses its transcriptional activity. Interaction with KAT2B; the interaction acetylates E2F1 enhancing its DNA-binding and transcriptional activity. Interacts with BIRC2/c-IAP1 (via BIR domains). The complex TFDP1:E2F1 interacts with CEBPA; the interaction prevents CEBPA binding to target genes promoters and represses its transcriptional activity. Interacts with RRP1B. Interacts with HCFC1. Interacts with KMT2E; the interaction is probably indirect and is mediated via HCFC1. Interacts with DCAF5 and L3MBTL3; the interaction requires methylation at Lys-180 and is necessary to target E2F1 for ubiquitination by the CRL4-DCAF5 E3 ubiquitin ligase complex. Post-translationally, phosphorylated by CDK2 and cyclin A-CDK2 in the S-phase. Phosphorylation by CHEK2 stabilizes E2F1 upon DNA damage and regulates its effect on transcription and apoptosis. Phosphorylation at Ser-396 by GSK3B promotes interaction with USP11, leading to its deubiquitination and stabilization. In terms of processing, ubiquitinated via 'Lys-63'-linked ubiquitin, leading to its degradation. Deubiquitinated by USP11 following phosphorylation by GSK3B, promoting its stability. Acetylation stimulates DNA-binding. Enhanced under stress conditions such as DNA damage and inhibited by retinoblastoma protein RB1. Regulated by KAP1/TRIM28 which recruits HDAC1 to E2F1 resulting in deacetylation. Acetylated by P/CAF/KAT2B. Post-translationally, methylation at Lys-180 by SETD7 promotes E2F1 ubiquitin-dependent proteasomal degradation.

It is found in the nucleus. BIRC2/c-IAP1 stimulates its transcriptional activity. Transcription activator that binds DNA cooperatively with DP proteins through the E2 recognition site, 5'-TTTC[CG]CGC-3' found in the promoter region of a number of genes whose products are involved in cell cycle regulation or in DNA replication. The DRTF1/E2F complex functions in the control of cell-cycle progression from G1 to S phase. E2F1 binds preferentially RB1 in a cell-cycle dependent manner. It can mediate both cell proliferation and TP53/p53-dependent apoptosis. Blocks adipocyte differentiation by binding to specific promoters repressing CEBPA binding to its target gene promoters. Directly activates transcription of PEG10. Positively regulates transcription of RRP1B. The polypeptide is Transcription factor E2F1 (Mus musculus (Mouse)).